The sequence spans 304 residues: DCN1-like protein 3 (304 aa).

2 disordered regions span residues M1–S86 and E284–T304. G2 carries N-myristoyl glycine lipidation. The region spanning S86–M278 is the DCUN1 domain.

In terms of assembly, part of a complex containing DCUN1D3, CUL3 and RBX1. Interacts (via the DCUN1 domain) with the unneddylated cullins: interacts with CUL1, CUL2, CUL3, CUL4A, CUL4B and CUL5; these interactions promote the cullin neddylation and the identity of the cullin dictates the affinity of the interaction. Interacts preferentially with CUL3; this interaction triggers the relocalization of CUL3 to the cell membrane where CUL3 is neddylated. Interacts (via DCUN1 domain) with RBX1. May also interact with regulators or subunits of cullin-RING ligases such as RNF7, ELOB and DDB1; these interactions are bridged by cullins. Interacts (via DCUN1 domain) with CAND1; this interaction is bridged by cullins and strongly inhibits cullin neddylation. These CAND-cullin-DCNL complexes can only be neddylated in the presence of a substrate adapter. Interacts (via DCUN1 domain) with the N-terminally acetylated form of UBE2M and UBE2F.

The protein resides in the cell membrane. The protein localises to the cytoplasm. Its subcellular location is the nucleus. It localises to the perinuclear region. Functionally, contributes to the neddylation of all cullins by transferring NEDD8 from N-terminally acetylated NEDD8-conjugating E2s enzyme to different cullin C-terminal domain-RBX complexes and may play a role in the cell cycle progression by regulating the SCF ubiquitin E3 ligase complex, after UV damage. At the cell membrane, can promote and as well inhibit cullins neddylation. The polypeptide is DCN1-like protein 3 (Pongo abelii (Sumatran orangutan)).